A 504-amino-acid polypeptide reads, in one-letter code: Paired zinc finger protein 1 (504 aa).

C2H2-type zinc fingers lie at residues 12–35 (LLCG…RQRH) and 39–62 (HMCL…KNKH). Residues 68–91 (FICVCCNWSFGTEIYLKCHEECMK) form a C2H2-type 3; degenerate zinc finger. Disordered stretches follow at residues 115–136 (ALNT…SPVP) and 154–173 (IESA…LVSG). Over residues 159-172 (RSSASTSTPRTLVS) the composition is skewed to polar residues. 2 C2H2-type zinc fingers span residues 179–202 (IPCG…RRFH) and 206–229 (HTCL…KSQH). Residues 235–258 (YNCLCCNWTFLNQVHLISHKTCLK) form a C2H2-type 6; degenerate zinc finger. A C2H2-type 7 zinc finger spans residues 309–332 (LSCKSCGKFFYSERSLSKHHRQIH). The C2H2-type 8; degenerate zinc finger occupies 365–389 (FNCRCCNWSFATRRCLMSHVECLKK).

Expressed in proximal gonad.

Its function is as follows. Possible transcriptional regulator. Involved in promoting segregation of chromosomes during meiosis, perhaps acting downstream of the let-60 RAS / mpk-1 MAPK signaling pathway. The sequence is that of Paired zinc finger protein 1 from Caenorhabditis elegans.